Consider the following 120-residue polypeptide: Ribonuclease P protein component 4 (120 aa).

Residues cysteine 68, cysteine 71, cysteine 97, and cysteine 100 each coordinate Zn(2+).

It belongs to the eukaryotic/archaeal RNase P protein component 4 family. Consists of a catalytic RNA component and at least 5 protein subunits. Forms a heterodimeric subcomplex with Rnp1. Reconstituted enzyme missing individual protein subunits is suboptimally active, showing each subunit contributes to optimization of activity. It depends on Zn(2+) as a cofactor.

The protein localises to the cytoplasm. It carries out the reaction Endonucleolytic cleavage of RNA, removing 5'-extranucleotides from tRNA precursor.. Part of ribonuclease P, a protein complex that generates mature tRNA molecules by cleaving their 5'-ends. Binds RNase P RNA. The sequence is that of Ribonuclease P protein component 4 from Pyrococcus horikoshii (strain ATCC 700860 / DSM 12428 / JCM 9974 / NBRC 100139 / OT-3).